We begin with the raw amino-acid sequence, 103 residues long: Large ribosomal subunit protein bL21 (103 aa).

The protein belongs to the bacterial ribosomal protein bL21 family. Part of the 50S ribosomal subunit. Contacts protein L20.

This protein binds to 23S rRNA in the presence of protein L20. The chain is Large ribosomal subunit protein bL21 from Shewanella frigidimarina (strain NCIMB 400).